The sequence spans 771 residues: Probable exo-1,4-beta-xylosidase bxlB (771 aa).

Positions 1–25 are cleaved as a signal peptide; it reads MVGLTPQHYGNAIALMTYLASTALA. Asn67 carries an N-linked (GlcNAc...) asparagine glycan. Asp293 is an active-site residue. Asn305, Asn345, Asn423, Asn462, and Asn463 each carry an N-linked (GlcNAc...) asparagine glycan.

It belongs to the glycosyl hydrolase 3 family.

The protein localises to the secreted. The enzyme catalyses Hydrolysis of (1-&gt;4)-beta-D-xylans, to remove successive D-xylose residues from the non-reducing termini.. It participates in glycan degradation; xylan degradation. In terms of biological role, xylan 1,4-beta-xylosidase involved in the hydrolysis of xylan, a major structural heterogeneous polysaccharide found in plant biomass representing the second most abundant polysaccharide in the biosphere, after cellulose. This Aspergillus clavatus (strain ATCC 1007 / CBS 513.65 / DSM 816 / NCTC 3887 / NRRL 1 / QM 1276 / 107) protein is Probable exo-1,4-beta-xylosidase bxlB (bxlB).